Here is a 213-residue protein sequence, read N- to C-terminus: Nickel-cobalt-cadmium resistance protein NccN (213 aa).

A run of 4 helical transmembrane segments spans residues 24-44 (IGIWRVVVSVVLIALITGHSQ), 48-68 (TWISAALLTVGMLGVTMATVG), 113-133 (ESITLAAILALAFALMYPAVI), and 180-200 (NLADSVWFLGMTIVVNAVELA).

The protein to A.eutrophus CzcN.

The protein localises to the cell inner membrane. Its function is as follows. Component of the NCC cation-efflux system that confers resistance to nickel, cobalt and cadmium. Appears to be involved in metal specificity but affects only nickel resistance. May be involved in nickel transport. This is Nickel-cobalt-cadmium resistance protein NccN (nccN) from Alcaligenes xylosoxydans xylosoxydans (Achromobacter xylosoxidans).